A 103-amino-acid polypeptide reads, in one-letter code: Small ribosomal subunit protein uS10 (103 aa).

The protein belongs to the universal ribosomal protein uS10 family. As to quaternary structure, part of the 30S ribosomal subunit.

Its function is as follows. Involved in the binding of tRNA to the ribosomes. In Ruminiclostridium cellulolyticum (strain ATCC 35319 / DSM 5812 / JCM 6584 / H10) (Clostridium cellulolyticum), this protein is Small ribosomal subunit protein uS10.